We begin with the raw amino-acid sequence, 306 residues long: MSTLGHQYDNSLVSNAFGFLRLPMNFQPYDSDADWVITGVPFDMATSGRAGGRHGPAAIRQVSTNLAWEHNRFPWNFDMRERLNVVDCGDLVYAFGDAREMSEKLQAHAEKLLAAGKRMLSFGGDHFVTLPLLRAHAKHFGKMALVHFDAHTDTYANGCEFDHGTMFYTAPKEGLIDPNHSVQIGIRTEFDKDNGFTVLDACQVNDRSVDDIIAQVKQIVGDMPVYLTFDIDCLDPAFAPGTGTPVIGGLTSDRAIKLVRGLKDLNIVGMDVVEVAPAYDQSEITALAAATLALEMLYIQAAKKGE.

His-126, Asp-149, His-151, Asp-153, Asp-230, and Asp-232 together coordinate Mn(2+).

It belongs to the arginase family. Agmatinase subfamily. The cofactor is Mn(2+).

It carries out the reaction agmatine + H2O = urea + putrescine. It participates in amine and polyamine biosynthesis; putrescine biosynthesis via agmatine pathway; putrescine from agmatine: step 1/1. Functionally, catalyzes the formation of putrescine from agmatine. This chain is Agmatinase, found in Escherichia coli O1:K1 / APEC.